Here is a 137-residue protein sequence, read N- to C-terminus: Small ribosomal subunit protein bS16m (137 aa).

Residues 1–34 (MVHLTTLLCKAYRGGHLTIRLALGGCTNRPFYRI) constitute a mitochondrion transit peptide. Thr130 carries the phosphothreonine modification.

It belongs to the bacterial ribosomal protein bS16 family. As to quaternary structure, component of the mitochondrial small ribosomal subunit (mt-SSU). Mature mammalian 55S mitochondrial ribosomes consist of a small (28S) and a large (39S) subunit. The 28S small subunit contains a 12S ribosomal RNA (12S mt-rRNA) and 30 different proteins. The 39S large subunit contains a 16S rRNA (16S mt-rRNA), a copy of mitochondrial valine transfer RNA (mt-tRNA(Val)), which plays an integral structural role, and 52 different proteins. bS16m has a zinc binding site.

It localises to the mitochondrion. The protein is Small ribosomal subunit protein bS16m (MRPS16) of Homo sapiens (Human).